A 327-amino-acid chain; its full sequence is MGQVATEEKRPTSVAELPGVGPSTAAKLIDAGYGTIEALAVATPEELVAIGIPLTTAQKIIRAARQMLDIRFRTAKEVKLERMNLRKITTGSKNLDDLLGGGIETKTITEFFGEFGSGKSQLCHQASVNVQLPLEQGGLSEGDKVAKAVYVDTEGTFRWERIEQMAKCLGLDPDQVMDNIYYIRAVNSDHQMAIVEELFNLVPKENVKLIVVDSVTSHFRAEYPGRENLAVRQQKLNKHLHQLGKLAEVYNTAVIITNQVMARPDVFYGDPTQAVGGHVLYHAPGVRVQLKKARGNKRIARVVDAPHLPEAEAVFAITDCGIRDPED.

113 to 120 (GEFGSGKS) is a binding site for ATP.

The protein belongs to the eukaryotic RecA-like protein family.

Involved in DNA repair and in homologous recombination. Binds and assemble on single-stranded DNA to form a nucleoprotein filament. Hydrolyzes ATP in a ssDNA-dependent manner and promotes DNA strand exchange between homologous DNA molecules. This Ignicoccus hospitalis (strain KIN4/I / DSM 18386 / JCM 14125) protein is DNA repair and recombination protein RadA.